Here is a 124-residue protein sequence, read N- to C-terminus: Small ribosomal subunit protein uS12 (124 aa).

Position 89 is a 3-methylthioaspartic acid (aspartate 89).

This sequence belongs to the universal ribosomal protein uS12 family. In terms of assembly, part of the 30S ribosomal subunit. Contacts proteins S8 and S17. May interact with IF1 in the 30S initiation complex.

Functionally, with S4 and S5 plays an important role in translational accuracy. In terms of biological role, interacts with and stabilizes bases of the 16S rRNA that are involved in tRNA selection in the A site and with the mRNA backbone. Located at the interface of the 30S and 50S subunits, it traverses the body of the 30S subunit contacting proteins on the other side and probably holding the rRNA structure together. The combined cluster of proteins S8, S12 and S17 appears to hold together the shoulder and platform of the 30S subunit. This chain is Small ribosomal subunit protein uS12 (rpsL), found in Mannheimia haemolytica (Pasteurella haemolytica).